The following is a 287-amino-acid chain: ATP synthase gamma chain (287 aa).

It belongs to the ATPase gamma chain family. F-type ATPases have 2 components, CF(1) - the catalytic core - and CF(0) - the membrane proton channel. CF(1) has five subunits: alpha(3), beta(3), gamma(1), delta(1), epsilon(1). CF(0) has three main subunits: a, b and c.

The protein localises to the cell inner membrane. In terms of biological role, produces ATP from ADP in the presence of a proton gradient across the membrane. The gamma chain is believed to be important in regulating ATPase activity and the flow of protons through the CF(0) complex. The sequence is that of ATP synthase gamma chain from Sodalis glossinidius (strain morsitans).